Consider the following 504-residue polypeptide: UDP-N-acetylmuramoylalanine--D-glutamate ligase (504 aa).

129–135 contributes to the ATP binding site; the sequence is GTNGKTT.

It belongs to the MurCDEF family.

The protein localises to the cytoplasm. It carries out the reaction UDP-N-acetyl-alpha-D-muramoyl-L-alanine + D-glutamate + ATP = UDP-N-acetyl-alpha-D-muramoyl-L-alanyl-D-glutamate + ADP + phosphate + H(+). The protein operates within cell wall biogenesis; peptidoglycan biosynthesis. Its function is as follows. Cell wall formation. Catalyzes the addition of glutamate to the nucleotide precursor UDP-N-acetylmuramoyl-L-alanine (UMA). The sequence is that of UDP-N-acetylmuramoylalanine--D-glutamate ligase from Burkholderia thailandensis (strain ATCC 700388 / DSM 13276 / CCUG 48851 / CIP 106301 / E264).